A 181-amino-acid polypeptide reads, in one-letter code: Salmonella anti-inflammatory response activator (181 aa).

The chain crosses the membrane as a helical span at residues phenylalanine 4–asparagine 24.

Interacts with host (human) STAT3.

It localises to the membrane. The protein resides in the host cytoplasm. In terms of biological role, a Salmonella strain-specific effector that induces a host STAT3-dependent anti-inflammatory pathway. In bacteria-infected host cells (human) leads to phosphorylation of host STAT3, at least on 'Tyr-705' and interleukin-10 (IL-10, IL10) production; expressing the gene alone in host cells induces STAT3 phosphorylation and IL-10 production. IL-10 production requires STAT3 in infected cells. Contributes to virulence in mouse infection models. Encoded in only a few S.typhimurium serovars, it may be a specific effector for adaptation to bovine hosts. In Salmonella typhimurium (strain 14028s / SGSC 2262), this protein is Salmonella anti-inflammatory response activator.